Consider the following 267-residue polypeptide: Ribonuclease HII (267 aa).

Positions 57 to 245 (WPVAGCDEVG…VVAARERHRA (189 aa)) constitute an RNase H type-2 domain. Residues Asp-63, Glu-64, and Asp-154 each contribute to the a divalent metal cation site.

It belongs to the RNase HII family. It depends on Mn(2+) as a cofactor. Mg(2+) is required as a cofactor.

It is found in the cytoplasm. It carries out the reaction Endonucleolytic cleavage to 5'-phosphomonoester.. In terms of biological role, endonuclease that specifically degrades the RNA of RNA-DNA hybrids. The sequence is that of Ribonuclease HII from Nitrobacter hamburgensis (strain DSM 10229 / NCIMB 13809 / X14).